Reading from the N-terminus, the 309-residue chain is Ribonuclease Z (309 aa).

Zn(2+) is bound by residues His63, His65, Asp67, His68, His141, Asp212, and His270. Asp67 serves as the catalytic Proton acceptor.

It belongs to the RNase Z family. In terms of assembly, homodimer. Zn(2+) serves as cofactor.

It carries out the reaction Endonucleolytic cleavage of RNA, removing extra 3' nucleotides from tRNA precursor, generating 3' termini of tRNAs. A 3'-hydroxy group is left at the tRNA terminus and a 5'-phosphoryl group is left at the trailer molecule.. In terms of biological role, zinc phosphodiesterase, which displays some tRNA 3'-processing endonuclease activity. Probably involved in tRNA maturation, by removing a 3'-trailer from precursor tRNA. The polypeptide is Ribonuclease Z (Halalkalibacterium halodurans (strain ATCC BAA-125 / DSM 18197 / FERM 7344 / JCM 9153 / C-125) (Bacillus halodurans)).